Reading from the N-terminus, the 397-residue chain is MSERKLFTSESVSEGHPDKIADQISDAILDAILAEDPDAHVAAETAVYTGSVHVFGEVSTTAYVDINRVVRDTIAEIGYNNAEYGFAAESVGVHPSLIEQSPDIAQGVNESLEVRGTGDQDSLDLIGAGDQGLMFGFAIDETPEFMPLPVSLSHKLVKKLADLRKSGEISYLRPDAKSQVTVEYDENDQPVRVDTVVISTQHDPEATNDQIRQDVIEKVIKAVIPAEYLDEDTKFFINPTGRFVIGGPQGDSGLTGRKIIVDTYGGYSRHGGGAFSGKDATKVDRSASYAARYIAKNIVAAGLAKKAEVQLAYAIGVANPVSVRVDTFGTATVAERKLESAVRDLFDLRPAGIIQMLDLKRPIYRQTAAYGHMGRTDVDLPWEKLDKVDALKAAVEA.

ATP is bound at residue His-16. Residue Asp-18 coordinates Mg(2+). Residue Glu-44 coordinates K(+). L-methionine is bound by residues Glu-57 and Gln-100. Positions 100 to 110 are flexible loop; it reads QSPDIAQGVNE. ATP is bound by residues 175 to 177, 242 to 243, Asp-251, 257 to 258, Ala-274, and Lys-278; these read DAK, RF, and RK. Asp-251 contacts L-methionine. Lys-282 is an L-methionine binding site.

The protein belongs to the AdoMet synthase family. Homotetramer; dimer of dimers. The cofactor is Mg(2+). K(+) is required as a cofactor.

It localises to the cytoplasm. The catalysed reaction is L-methionine + ATP + H2O = S-adenosyl-L-methionine + phosphate + diphosphate. It functions in the pathway amino-acid biosynthesis; S-adenosyl-L-methionine biosynthesis; S-adenosyl-L-methionine from L-methionine: step 1/1. Catalyzes the formation of S-adenosylmethionine (AdoMet) from methionine and ATP. The overall synthetic reaction is composed of two sequential steps, AdoMet formation and the subsequent tripolyphosphate hydrolysis which occurs prior to release of AdoMet from the enzyme. This Streptococcus thermophilus (strain ATCC BAA-250 / LMG 18311) protein is S-adenosylmethionine synthase.